Consider the following 190-residue polypeptide: Putative hydrolase YdeN (190 aa).

Catalysis depends on charge relay system residues Ser71, Asp137, and His164.

This sequence belongs to the RBBP9 family.

This chain is Putative hydrolase YdeN (ydeN), found in Bacillus subtilis (strain 168).